The chain runs to 226 residues: V-type proton ATPase subunit E 1 (226 aa).

Ala2 carries the post-translational modification N-acetylalanine. Tyr56 carries the post-translational modification Phosphotyrosine.

It belongs to the V-ATPase E subunit family. In terms of assembly, V-ATPase is a heteromultimeric enzyme made up of two complexes: the ATP-hydrolytic V1 complex and the proton translocation V0 complex. The V1 complex consists of three catalytic AB heterodimers that form a heterohexamer, three peripheral stalks each consisting of EG heterodimers, one central rotor including subunits D and F, and the regulatory subunits C and H. The proton translocation complex V0 consists of the proton transport subunit a, a ring of proteolipid subunits c9c'', rotary subunit d, subunits e and f, and the accessory subunits ATP6AP1/Ac45 and ATP6AP2/PRR. Interacts with RABL2/RABL2A; binds preferentially to GTP-bound RABL2. Interacts with ALDOC. Interacts with RAB11B. In terms of tissue distribution, expressed in brain (at protein level).

It is found in the apical cell membrane. Its subcellular location is the cytoplasmic vesicle. The protein resides in the secretory vesicle. The protein localises to the synaptic vesicle membrane. It localises to the clathrin-coated vesicle membrane. Subunit of the V1 complex of vacuolar(H+)-ATPase (V-ATPase), a multisubunit enzyme composed of a peripheral complex (V1) that hydrolyzes ATP and a membrane integral complex (V0) that translocates protons. V-ATPase is responsible for acidifying and maintaining the pH of intracellular compartments and in some cell types, is targeted to the plasma membrane, where it is responsible for acidifying the extracellular environment. The protein is V-type proton ATPase subunit E 1 (Atp6v1e1) of Rattus norvegicus (Rat).